The sequence spans 208 residues: Small ribosomal subunit protein uS4 (208 aa).

The 64-residue stretch at R98–Q161 folds into the S4 RNA-binding domain.

The protein belongs to the universal ribosomal protein uS4 family. In terms of assembly, part of the 30S ribosomal subunit. Contacts protein S5. The interaction surface between S4 and S5 is involved in control of translational fidelity.

In terms of biological role, one of the primary rRNA binding proteins, it binds directly to 16S rRNA where it nucleates assembly of the body of the 30S subunit. Functionally, with S5 and S12 plays an important role in translational accuracy. This chain is Small ribosomal subunit protein uS4, found in Nitratidesulfovibrio vulgaris (strain DSM 19637 / Miyazaki F) (Desulfovibrio vulgaris).